The following is a 488-amino-acid chain: Probable malate:quinone oxidoreductase (488 aa).

Belongs to the MQO family. Requires FAD as cofactor.

The enzyme catalyses (S)-malate + a quinone = a quinol + oxaloacetate. Its pathway is carbohydrate metabolism; tricarboxylic acid cycle; oxaloacetate from (S)-malate (quinone route): step 1/1. In Neisseria meningitidis serogroup C / serotype 2a (strain ATCC 700532 / DSM 15464 / FAM18), this protein is Probable malate:quinone oxidoreductase.